A 151-amino-acid chain; its full sequence is Probable cGMP 3',5'-cyclic phosphodiesterase subunit delta (151 aa).

This sequence belongs to the PDE6D/unc-119 family. As to quaternary structure, interacts with Pde6.

It localises to the nucleus. It is found in the cytoplasm. This is Probable cGMP 3',5'-cyclic phosphodiesterase subunit delta from Drosophila mojavensis (Fruit fly).